The sequence spans 276 residues: Elongation factor Ts, mitochondrial (276 aa).

It belongs to the EF-Ts family.

Its subcellular location is the mitochondrion. Functionally, associates with the EF-Tu.GDP complex and induces the exchange of GDP to GTP. It remains bound to the aminoacyl-tRNA.EF-Tu.GTP complex up to the GTP hydrolysis stage on the ribosome. The sequence is that of Elongation factor Ts, mitochondrial from Leishmania major.